The sequence spans 263 residues: Putative replication protein PDa0002 (263 aa).

This chain is Putative replication protein PDa0002, found in Xylella fastidiosa (strain Temecula1 / ATCC 700964).